The following is a 248-amino-acid chain: Cyclin-Q (248 aa).

M1 carries the post-translational modification N-acetylmethionine. The segment covering 1–12 (MEAPEGGGGGPA) has biased composition (gly residues). Residues 1-21 (MEAPEGGGGGPAARGPEGQPA) form a disordered region.

The protein belongs to the cyclin family. Cyclin-like FAM58 subfamily. Associates with CDK10 to promote its kinase activity. Interacts with SALL1.

Functionally, activating cyclin for the cyclin-associated kinase CDK10. This chain is Cyclin-Q, found in Homo sapiens (Human).